Reading from the N-terminus, the 263-residue chain is Nicotinamide riboside transporter PnuC (263 aa).

Residues Met1 to Trp40 lie on the Cytoplasmic side of the membrane. Residues Thr41–Phe61 form a helical membrane-spanning segment. Residue Asn62 is a topological domain, periplasmic. A helical membrane pass occupies residues Pro63 to Gly83. At Lys84–Lys86 the chain is on the cytoplasmic side. A helical transmembrane segment spans residues Ile87–Phe107. Residues Lys108–Leu109 are Periplasmic-facing. The helical transmembrane segment at Tyr110–Trp131 threads the bilayer. Gln124 is a beta-nicotinamide D-riboside binding site. Residues Arg132–Gln155 are Cytoplasmic-facing. The chain crosses the membrane as a helical span at residues Trp156 to Leu177. Topologically, residues Gly178–Ala180 are periplasmic. A helical membrane pass occupies residues Leu181–Leu201. A beta-nicotinamide D-riboside-binding site is contributed by Gln196. Over Arg202 to Glu205 the chain is Cytoplasmic. Residues Gln206–Phe226 form a helical membrane-spanning segment. Residues Trp210 and Asn214 each contribute to the beta-nicotinamide D-riboside site. Topologically, residues Lys227–Ser232 are periplasmic. Residues Leu233–Trp253 traverse the membrane as a helical segment. Tyr242 serves as a coordination point for beta-nicotinamide D-riboside. Over Thr254 to Gln263 the chain is Cytoplasmic.

This sequence belongs to the nicotinamide ribonucleoside (NR) uptake permease (TC 4.B.1) family. In terms of assembly, homotrimer.

The protein resides in the cell inner membrane. Required for nicotinamide riboside transport across the inner membrane. The protein is Nicotinamide riboside transporter PnuC of Neisseria mucosa (strain ATCC 25996 / DSM 4631 / NCTC 10774 / M26).